The following is a 490-amino-acid chain: Cytochrome P450 2W1 (490 aa).

Positions 1–22 (MALLLLLFLGLLGLWGLLCACA) are cleaved as a signal peptide. The N-linked (GlcNAc...) asparagine glycan is linked to Asn177. Cys433 contributes to the heme binding site.

The protein belongs to the cytochrome P450 family. Heme is required as a cofactor. Very low levels are detected in fetal and adult tissues. Highly expressed in several tumor samples, in particular colon and adrenal tumors.

The protein localises to the endoplasmic reticulum lumen. It localises to the cell membrane. It is found in the microsome membrane. It catalyses the reaction all-trans-retinoate + reduced [NADPH--hemoprotein reductase] + O2 = all-trans-4-hydroxyretinoate + oxidized [NADPH--hemoprotein reductase] + H2O + H(+). The catalysed reaction is 1-(9Z-octadecenoyl)-sn-glycero-3-phosphocholine + reduced [NADPH--hemoprotein reductase] + O2 = 1-[8-hydroxy-(9Z)-octadecenoyl]-sn-glycero-3-phosphocholine + oxidized [NADPH--hemoprotein reductase] + H2O + H(+). The enzyme catalyses 1-(9Z-octadecenoyl)-sn-glycero-3-phosphocholine + reduced [NADPH--hemoprotein reductase] + O2 = 1-[11-hydroxy-(9Z)-octadecenoyl]-sn-glycero-3-phosphocholine + oxidized [NADPH--hemoprotein reductase] + H2O + H(+). It carries out the reaction 1-(9Z-octadecenoyl)-sn-glycero-3-phosphocholine + reduced [NADPH--hemoprotein reductase] + O2 = 1-[(9S,10R)-epoxy-octadecanoyl]-sn-glycero-3-phosphocholine + oxidized [NADPH--hemoprotein reductase] + H2O + H(+). It catalyses the reaction 1-(9Z-octadecenoyl)-sn-glycero-3-phosphocholine + reduced [NADPH--hemoprotein reductase] + O2 = 1-[(9R,10S)-epoxy-octadecanoyl]-sn-glycero-3-phosphocholine + oxidized [NADPH--hemoprotein reductase] + H2O + H(+). Its function is as follows. A cytochrome P450 monooxygenase that may play a role in retinoid and phospholipid metabolism. Catalyzes the hydroxylation of saturated carbon hydrogen bonds. Hydroxylates all trans-retinoic acid (atRA) to 4-hydroxyretinoate and may regulate atRA clearance. Other retinoids such as all-trans retinol and all-trans retinal are potential endogenous substrates. Catalyzes both epoxidation of double bonds and hydroxylation of carbon hydrogen bonds of the fatty acyl chain of 1-acylphospholipids/2-lysophospholipids. Can metabolize various lysophospholipids classes including lysophosphatidylcholines (LPCs), lysophosphatidylinositols (LPIs), lysophosphatidylserines (LPSs), lysophosphatidylglycerols (LPGs), lysophosphatidylethanolamines (LPEs) and lysophosphatidic acids (LPAs). Has low or no activity toward 2-acylphospholipids/1-lysophospholipids, diacylphospholipids and free fatty acids. May play a role in tumorigenesis by activating procarcinogens such as aflatoxin B1, polycyclic aromatic hydrocarbon dihydrodiols and aromatic amines. Mechanistically, uses molecular oxygen inserting one oxygen atom into a substrate, and reducing the second into a water molecule, with two electrons provided by NADPH via cytochrome P450 reductase (CPR; NADPH-ferrihemoprotein reductase). The polypeptide is Cytochrome P450 2W1 (Homo sapiens (Human)).